We begin with the raw amino-acid sequence, 480 residues long: Ribosomal RNA small subunit methyltransferase F (480 aa).

S-adenosyl-L-methionine contacts are provided by residues 126–132 (AAAPGSK), Glu-150, Asp-177, and Asp-195. Cys-248 (nucleophile) is an active-site residue.

It belongs to the class I-like SAM-binding methyltransferase superfamily. RsmB/NOP family.

It localises to the cytoplasm. The catalysed reaction is cytidine(1407) in 16S rRNA + S-adenosyl-L-methionine = 5-methylcytidine(1407) in 16S rRNA + S-adenosyl-L-homocysteine + H(+). Functionally, specifically methylates the cytosine at position 1407 (m5C1407) of 16S rRNA. The chain is Ribosomal RNA small subunit methyltransferase F from Cronobacter sakazakii (strain ATCC BAA-894) (Enterobacter sakazakii).